A 506-amino-acid chain; its full sequence is ATP synthase subunit alpha (506 aa).

170 to 177 (GDRQTGKT) contributes to the ATP binding site.

Belongs to the ATPase alpha/beta chains family. In terms of assembly, F-type ATPases have 2 components, CF(1) - the catalytic core - and CF(0) - the membrane proton channel. CF(1) has five subunits: alpha(3), beta(3), gamma(1), delta(1), epsilon(1). CF(0) has four main subunits: a(1), b(1), b'(1) and c(9-12).

It is found in the cellular thylakoid membrane. It carries out the reaction ATP + H2O + 4 H(+)(in) = ADP + phosphate + 5 H(+)(out). In terms of biological role, produces ATP from ADP in the presence of a proton gradient across the membrane. The alpha chain is a regulatory subunit. The chain is ATP synthase subunit alpha from Synechococcus sp. (strain JA-2-3B'a(2-13)) (Cyanobacteria bacterium Yellowstone B-Prime).